The primary structure comprises 195 residues: HTH-type transcriptional regulator BetI (195 aa).

Residues 8–68 form the HTH tetR-type domain; that stretch reads EIRRAQLIDA…ATMRHVLRDL (61 aa). The H-T-H motif DNA-binding region spans 31 to 50; that stretch reads TLASVAQRANISTGIVSHYF.

It participates in amine and polyamine biosynthesis; betaine biosynthesis via choline pathway [regulation]. In terms of biological role, repressor involved in the biosynthesis of the osmoprotectant glycine betaine. It represses transcription of the choline transporter BetT and the genes of BetAB involved in the synthesis of glycine betaine. In Burkholderia thailandensis (strain ATCC 700388 / DSM 13276 / CCUG 48851 / CIP 106301 / E264), this protein is HTH-type transcriptional regulator BetI.